Reading from the N-terminus, the 39-residue chain is MIEPLLCGIVLGLVPITIVGLFVSAWNQYRRESAMPDWE.

The helical transmembrane segment at 5 to 25 (LLCGIVLGLVPITIVGLFVSA) threads the bilayer.

This sequence belongs to the PetG family. In terms of assembly, the 4 large subunits of the cytochrome b6-f complex are cytochrome b6, subunit IV (17 kDa polypeptide, PetD), cytochrome f and the Rieske protein, while the 4 small subunits are PetG, PetL, PetM and PetN. The complex functions as a dimer.

The protein localises to the cellular thylakoid membrane. Functionally, component of the cytochrome b6-f complex, which mediates electron transfer between photosystem II (PSII) and photosystem I (PSI), cyclic electron flow around PSI, and state transitions. PetG is required for either the stability or assembly of the cytochrome b6-f complex. This is Cytochrome b6-f complex subunit 5 from Prochlorococcus marinus (strain MIT 9211).